The following is a 448-amino-acid chain: Exodeoxyribonuclease 7 large subunit (448 aa).

Belongs to the XseA family. In terms of assembly, heterooligomer composed of large and small subunits.

The protein resides in the cytoplasm. The catalysed reaction is Exonucleolytic cleavage in either 5'- to 3'- or 3'- to 5'-direction to yield nucleoside 5'-phosphates.. Its function is as follows. Bidirectionally degrades single-stranded DNA into large acid-insoluble oligonucleotides, which are then degraded further into small acid-soluble oligonucleotides. This is Exodeoxyribonuclease 7 large subunit from Photobacterium profundum (strain SS9).